The primary structure comprises 298 residues: Nucleotide-binding protein MLBr00563 (298 aa).

Residue 21-28 coordinates ATP; sequence GLSGAGRG. Residue 72–75 participates in GTP binding; that stretch reads DVRS.

Belongs to the RapZ-like family.

Functionally, displays ATPase and GTPase activities. This Mycobacterium leprae (strain Br4923) protein is Nucleotide-binding protein MLBr00563.